Consider the following 298-residue polypeptide: ATP synthase F(1) complex subunit gamma, mitochondrial (298 aa).

The transit peptide at 1–25 (MFSRAGVAGLSAWTVQPQWIQVRNM) directs the protein to the mitochondrion. At Lys39 the chain carries N6-acetyllysine. Lys49 carries the post-translational modification N6-succinyllysine. Lys55 carries the N6-acetyllysine modification. Position 115 is an N6-acetyllysine; alternate (Lys115). Position 115 is an N6-succinyllysine; alternate (Lys115). At Ser146 the chain carries Phosphoserine. Position 154 is an N6-acetyllysine; alternate (Lys154). Lys154 carries the N6-succinyllysine; alternate modification. Residue Lys197 is modified to N6-acetyllysine. Lys270 bears the N6-succinyllysine mark.

Belongs to the ATPase gamma chain family. In terms of assembly, component of the ATP synthase complex composed at least of ATP5F1A/subunit alpha, ATP5F1B/subunit beta, ATP5MC1/subunit c (homooctomer), MT-ATP6/subunit a, MT-ATP8/subunit 8, ATP5ME/subunit e, ATP5MF/subunit f, ATP5MG/subunit g, ATP5MK/subunit k, ATP5MJ/subunit j, ATP5F1C/subunit gamma, ATP5F1D/subunit delta, ATP5F1E/subunit epsilon, ATP5PF/subunit F6, ATP5PB/subunit b, ATP5PD/subunit d, ATP5PO/subunit OSCP. ATP synthase complex consists of a soluble F(1) head domain (subunits alpha(3) and beta(3)) - the catalytic core - and a membrane F(0) domain - the membrane proton channel (subunits c, a, 8, e, f, g, k and j). These two domains are linked by a central stalk (subunits gamma, delta, and epsilon) rotating inside the F1 region and a stationary peripheral stalk (subunits F6, b, d, and OSCP). Interacts with FLVCR2; this interaction occurs in the absence of heme and is disrupted upon heme binding.

It is found in the mitochondrion inner membrane. Its function is as follows. Subunit gamma, of the mitochondrial membrane ATP synthase complex (F(1)F(0) ATP synthase or Complex V) that produces ATP from ADP in the presence of a proton gradient across the membrane which is generated by electron transport complexes of the respiratory chain. ATP synthase complex consist of a soluble F(1) head domain - the catalytic core - and a membrane F(1) domain - the membrane proton channel. These two domains are linked by a central stalk rotating inside the F(1) region and a stationary peripheral stalk. During catalysis, ATP synthesis in the catalytic domain of F(1) is coupled via a rotary mechanism of the central stalk subunits to proton translocation. In vivo, can only synthesize ATP although its ATP hydrolase activity can be activated artificially in vitro. With the central stalk subunit delta, is essential for the biogenesis of F(1) catalytic part of the ATP synthase complex namely in the formation of F1 assembly intermediate. The protein is ATP synthase F(1) complex subunit gamma, mitochondrial of Bos taurus (Bovine).